We begin with the raw amino-acid sequence, 570 residues long: Potassium-transporting ATPase potassium-binding subunit (570 aa).

11 consecutive transmembrane segments (helical) span residues 7–27 (AEIA…GVFL), 65–85 (AYAL…YAVL), 95–115 (PQGF…SFIT), 135–155 (LVLT…AAAL), 179–199 (LYLL…LGLP), 254–274 (LTNL…FFAF), 286–306 (ALVI…YATE), 383–403 (GVAI…LMVG), 422–442 (ILAV…AAVL), 489–509 (LGIA…AIAG), and 528–548 (GGLF…LQFF).

This sequence belongs to the KdpA family. The system is composed of three essential subunits: KdpA, KdpB and KdpC.

It localises to the cell inner membrane. Its function is as follows. Part of the high-affinity ATP-driven potassium transport (or Kdp) system, which catalyzes the hydrolysis of ATP coupled with the electrogenic transport of potassium into the cytoplasm. This subunit binds the periplasmic potassium ions and delivers the ions to the membrane domain of KdpB through an intramembrane tunnel. The protein is Potassium-transporting ATPase potassium-binding subunit of Caulobacter vibrioides (strain ATCC 19089 / CIP 103742 / CB 15) (Caulobacter crescentus).